The sequence spans 255 residues: Ribonuclease HII (255 aa).

The 186-residue stretch at 70 to 255 (EYIAGVDEVG…FEPVKKILLK (186 aa)) folds into the RNase H type-2 domain. Residues aspartate 76, glutamate 77, and aspartate 168 each coordinate a divalent metal cation.

Belongs to the RNase HII family. Mn(2+) serves as cofactor. The cofactor is Mg(2+).

The protein resides in the cytoplasm. It catalyses the reaction Endonucleolytic cleavage to 5'-phosphomonoester.. In terms of biological role, endonuclease that specifically degrades the RNA of RNA-DNA hybrids. The sequence is that of Ribonuclease HII from Ligilactobacillus salivarius (strain UCC118) (Lactobacillus salivarius).